Consider the following 809-residue polypeptide: MEGVGAVRFWLVVCGCLAFPPRAESVCPERCDCQHPQHLLCTNRGLRAVPKTSSLPSPQDVLTYSLGGNFITNITAFDFHRLGQLRRLDLQYNQIRSLHPKTFEKLSRLEELYLGNNLLQALVPGTLAPLRKLRILYANGNEIGRLSRGSFEGLESLVKLRLDGNVLGALPDAVFAPLGNLLYLHLESNRIRFLGKNAFSQLGKLRFLNLSANELQPSLRHAATFVPLRSLSTLILSANSLQHLGPRVFQHLPRLGLLSLSGNQLTHLAPEAFWGLEALRELRLEGNRLNQLPLTLLEPLHSLEALDLSGNELSALHPATFGHQGRLRELSLRDNALSALSGDIFAASPALYRLDLDGNGWTCDCRLRGLKRWMGNWHSQGRLLTVFVQCRHPPALRGKYLDYLDDQLLQNGSCVDPSPSPTAGSRQWPLPTSSEEGMTPPAGLSQELPLQPQPQPQQRGRLLPGVAWGGAAKELVGNRSALRLSRRGPGPHQGPSAAAPGSAPQSLDLHEKPGRGRHTRANLSQTEPTPTSEPASGTPSARDSWQRAAKQRLASEQQESAVQSVSGVGLPPLVSDPCDFNKFILCNLTVEAVSANSASVRWAVREHRSPRPQGGARFRLLFDRFGQQPKFQRFVYLPERSDSATLHELRGDTPYLVCVEGVLGGRVCPVAPRDHCAGLVTLPEAGGRGGVDYQLLTLVLLAVNALLVLLALAAWGSRWLRRKLRARRKGGAPVHVRHMYSTRRPLRSMGTGVSADFSGFQSHRPRTTVCALSEADLIEFPCDRFMDSTGGGTSGSLRREDHLLQRFAD.

An N-terminal signal peptide occupies residues 1–25 (MEGVGAVRFWLVVCGCLAFPPRAES). An LRRNT domain is found at 26 to 57 (VCPERCDCQHPQHLLCTNRGLRAVPKTSSLPS). Residues 26–694 (VCPERCDCQH…AGGRGGVDYQ (669 aa)) lie on the Extracellular side of the membrane. 12 LRR repeats span residues 61–81 (VLTY…DFHR), 84–105 (QLRR…TFEK), 108–129 (RLEE…TLAP), 132–153 (KLRI…SFEG), 156–177 (SLVK…VFAP), 180–201 (NLLY…AFSQ), 204–223 (KLRF…RHAA), 230–251 (SLST…VFQH), 254–275 (RLGL…AFWG), 278–298 (ALRE…TLLE), 302–323 (SLEA…TFGH), and 326–347 (RLRE…IFAA). N73 is a glycosylation site (N-linked (GlcNAc...) asparagine). Positions 359 to 416 (NGWTCDCRLRGLKRWMGNWHSQGRLLTVFVQCRHPPALRGKYLDYLDDQLLQNGSCVD) constitute an LRRCT domain. N411 carries N-linked (GlcNAc...) asparagine glycosylation. Disordered regions lie at residues 412 to 462 (GSCV…RGRL) and 483 to 563 (RLSR…SAVQ). Over residues 421–436 (PTAGSRQWPLPTSSEE) the composition is skewed to polar residues. Residues 488-506 (GPGPHQGPSAAAPGSAPQS) show a composition bias toward low complexity. Over residues 521 to 543 (ANLSQTEPTPTSEPASGTPSARD) the composition is skewed to polar residues. Low complexity predominate over residues 554–563 (ASEQQESAVQ). An N-linked (GlcNAc...) asparagine glycan is attached at N587. Residues 695–715 (LLTLVLLAVNALLVLLALAAW) traverse the membrane as a helical segment. The Cytoplasmic portion of the chain corresponds to 716–809 (GSRWLRRKLR…EDHLLQRFAD (94 aa)). S796 is subject to Phosphoserine.

In terms of assembly, belongs to the lipopolysaccharide (LPS) receptor, a multi-protein complex containing at least CD14, MD-2 and TLR4. Interacts with TLR4; this interaction is greatly enhanced by LPS stimulation. Interacts with LPS. In terms of processing, N-glycolysaled. Highly expressed in brain, spinal cord and lung.

It is found in the membrane. Its function is as follows. Component of the TLR4 signaling complex. Mediates the innate immune response to bacterial lipopolysaccharide (LPS) leading to cytokine secretion. In Mus musculus (Mouse), this protein is TLR4 interactor with leucine rich repeats (Tril).